The primary structure comprises 788 residues: MQRYNSTYVVKRDGRKEDVHFDKITSRIQKLSYGLNMDFVDPVAVAIKVISGLYKGVTTVELDNLAAETAASMTTQHPEYALLAARIAVSNLHKKTNKVFSEVMKTLHEFHHPHTGKHAPMISDETWAIIEKNADKLNSAIVYDRDYSYTYFGFKTLERSYLLKINKEIVERPQQMLMRVSIGIHGDDITSAIETYNLMSERYMTHASPTLFNSGTCRPQMSSCFLLTMSEDSILGIYDTLKQCALISKSAGGIGLNVHKIRATGSVIAGTNGTSNGLIPMLRVYNNTARYVDQGGNKRPGAFAIYLEPWHADIFEFVSLRKNTGPEEERARDLFLALWIPDLFMKRVEKDQEWSLMCPCECPGLDDCWGEEFEALYAKYEAEGRVRKTVKARKLWEHIVSNQIETGLPYITYKDAANRKSNQQNLGTIKCSNLCTEIIEYSAPDEIAVCNLASIALNRYVTPEKKFDFVKLAEVTKVITRNLNKIIDVNYYPVEEARNSNMRHRPIGLGVQGLADCFMLMRYPFTSAEARDLNKRIFETIYYAALEASCELAELNGPYSTYEGSPVSKGQLQFDMWGVTPTDQCDWATLRKKIAKHGIRNSLLMAPMPTASTAQILGNNESIEPYTSNIYSRRVLSGDFQIVNPHMLKDLVERGLWTDEMKNRLIANNGSIQNIDGIPSDIKELYRTVWEISQKDIIEMAADRGAYIDQSQSLNIHMAKPSYAGITSMHFYGWKKGLKTGMYYLRTKPAVNAVQFTVDKNALKTNQQAETPATVAESQDEGCLMCSG.

An ATP-cone domain is found at 7–98; it reads TYVVKRDGRK…VSNLHKKTNK (92 aa). ATP contacts are provided by residues 11 to 12, 17 to 23, T59, and D63; these read KR and EDVHFDK. S208 and S223 together coordinate GDP. Residues C224 and C450 are joined by a disulfide bond. Residues 232 to 234, K249, R262, and 269 to 270 contribute to the dTTP site; these read DSI and AG. Residue N433 participates in GDP binding. The active-site Proton acceptor is the N433. C435 acts as the Cysteine radical intermediate in catalysis. Residues E437 and 610-613 contribute to the GDP site; that span reads TAST. E437 functions as the Proton acceptor in the catalytic mechanism.

Belongs to the ribonucleoside diphosphate reductase large chain family. As to quaternary structure, heterodimer of a large and a small subunit.

The catalysed reaction is a 2'-deoxyribonucleoside 5'-diphosphate + [thioredoxin]-disulfide + H2O = a ribonucleoside 5'-diphosphate + [thioredoxin]-dithiol. Its activity is regulated as follows. Under complex allosteric control mediated by deoxynucleoside triphosphates and ATP binding to separate specificity and activation sites on the large subunit. The type of nucleotide bound at the specificity site determines substrate preference. It seems probable that ATP makes the enzyme reduce CDP and UDP, dGTP favors ADP reduction and dTTP favors GDP reduction. Stimulated by ATP and inhibited by dATP binding to the activity site. Provides the precursors necessary for DNA synthesis. Catalyzes the biosynthesis of deoxyribonucleotides from the corresponding ribonucleotides. The protein is Ribonucleoside-diphosphate reductase large subunit (rnr-1) of Caenorhabditis elegans.